The primary structure comprises 97 residues: Sorbitol dehydrogenase (97 aa).

Residue Cys-44 coordinates Zn(2+). Tyr-50 lines the substrate pocket. Residues His-69 and Glu-70 each contribute to the Zn(2+) site.

The protein belongs to the zinc-containing alcohol dehydrogenase family. As to quaternary structure, homotetramer. Requires Zn(2+) as cofactor.

The protein resides in the mitochondrion membrane. It localises to the cell projection. It is found in the cilium. The protein localises to the flagellum. It catalyses the reaction xylitol + NAD(+) = D-xylulose + NADH + H(+). It carries out the reaction L-iditol + NAD(+) = keto-L-sorbose + NADH + H(+). The enzyme catalyses keto-D-fructose + NADH + H(+) = D-sorbitol + NAD(+). Polyol dehydrogenase that catalyzes the reversible NAD(+)-dependent oxidation of various sugar alcohols. Is active with xylitol, L-iditol and D-sorbitol (D-glucitol) as substrates, leading to the C2-oxidized products D-xylulose, L-sorbose and D-fructose, respectively. Is a key enzyme in the polyol pathway that interconverts glucose and fructose via sorbitol, which constitutes an important alternate route for glucose metabolism. May play a role in sperm motility by using sorbitol as an alternative energy source for sperm motility. The sequence is that of Sorbitol dehydrogenase (SORD) from Sus scrofa (Pig).